The primary structure comprises 334 residues: Probable prephenate dehydratase (334 aa).

The Prephenate dehydratase domain maps to 7 to 224; it reads RVLFLGPKGT…NTTRFLVLKR (218 aa). Residues 244–322 enclose the ACT domain; it reads LTFTTRQDDP…SDKSKQWCLW (79 aa).

The protein resides in the cytoplasm. It carries out the reaction prephenate + H(+) = 3-phenylpyruvate + CO2 + H2O. The protein operates within amino-acid biosynthesis; L-phenylalanine biosynthesis; phenylpyruvate from prephenate: step 1/1. In terms of biological role, catayzes the decarboxylation/dehydration of prephenate to phenylpyruvate. The sequence is that of Probable prephenate dehydratase (PHA2) from Saccharomyces cerevisiae (strain ATCC 204508 / S288c) (Baker's yeast).